Here is a 175-residue protein sequence, read N- to C-terminus: Small ribosomal subunit protein uS4 (175 aa).

The 65-residue stretch at 105–169 (RRLQTIVYRQ…SPLADSLHPA (65 aa)) folds into the S4 RNA-binding domain.

It belongs to the universal ribosomal protein uS4 family. As to quaternary structure, part of the 30S ribosomal subunit. Contacts protein S5. The interaction surface between S4 and S5 is involved in control of translational fidelity.

In terms of biological role, one of the primary rRNA binding proteins, it binds directly to 16S rRNA where it nucleates assembly of the body of the 30S subunit. Functionally, with S5 and S12 plays an important role in translational accuracy. This is Small ribosomal subunit protein uS4 from Haloquadratum walsbyi (strain DSM 16790 / HBSQ001).